A 617-amino-acid polypeptide reads, in one-letter code: Lipoteichoic acid synthase-like YvgJ (617 aa).

Residues 1-10 are Cytoplasmic-facing; that stretch reads MKGTFFHNQR. The helical transmembrane segment at 11 to 31 threads the bilayer; the sequence is FLCFSILFMWIKTYVIYKLGF. Residues 32-41 lie on the Extracellular side of the membrane; sequence DLQIDTLLEE. Residues 42-62 traverse the membrane as a helical segment; sequence LMLLVNPLSFILPLFGIGLFL. Topologically, residues 63-68 are cytoplasmic; it reads KENKQR. Residues 69 to 89 form a helical membrane-spanning segment; it reads AFLLIANLVLTVILISNTIFY. At 90 to 115 the chain is on the extracellular side; that stretch reads GFYIDFITIPVLFQASNMSDMGSSVK. The chain crosses the membrane as a helical span at residues 116-136; that stretch reads ELFHPLFIALFVDLVFLLLFA. Topologically, residues 137–153 are cytoplasmic; that stretch reads RKTKHPQTKAAPHTIKR. Residues 154–171 traverse the membrane as a helical segment; it reads YYAASCGMLLCTLALAEV. At 172-617 the chain is on the extracellular side; that stretch reads QQPKLLAHSF…LNGDLLRFSE (446 aa). Mn(2+)-binding residues include glutamate 251 and threonine 293. Threonine 293 is an active-site residue. Histidine 408 provides a ligand contact to substrate. Positions 467 and 468 each coordinate Mn(2+).

This sequence belongs to the LTA synthase family. Post-translationally, proteolytically cleaved.

The protein localises to the cell membrane. Its subcellular location is the secreted. The protein is Lipoteichoic acid synthase-like YvgJ (yvgJ) of Bacillus subtilis (strain 168).